The primary structure comprises 150 residues: 3-dehydroquinate dehydratase (150 aa).

Catalysis depends on Tyr26, which acts as the Proton acceptor. Substrate-binding residues include Asn77, His83, and Asp90. His103 (proton donor) is an active-site residue. Substrate is bound by residues 104-105 (LS) and Arg114.

The protein belongs to the type-II 3-dehydroquinase family. As to quaternary structure, homododecamer.

The catalysed reaction is 3-dehydroquinate = 3-dehydroshikimate + H2O. The protein operates within metabolic intermediate biosynthesis; chorismate biosynthesis; chorismate from D-erythrose 4-phosphate and phosphoenolpyruvate: step 3/7. In terms of biological role, catalyzes a trans-dehydration via an enolate intermediate. The polypeptide is 3-dehydroquinate dehydratase (Yersinia enterocolitica serotype O:8 / biotype 1B (strain NCTC 13174 / 8081)).